The chain runs to 591 residues: MVTVSEQTAQGHVIEAYGNLLRVRFDGYVRQGEVAYVNVDNTWLKAEVIEVADQEVKVQVFEDTQGACRGALVTFSGHLLEAELGPGLLQGIFDGLQNRLEVLAEDSSFLQRGKHVNAISDHNLWNYTPVASVGDTLRRGDLLGTVPEGRFTHKIMVPFSCFQEVTLTWVISEGTYNAHTVVAKARDAQGKECAFTMVQRWPIKQAFIEGEKIPAHKIMDVGLRILDTQIPVLKGGTFCTPGPFGAGKTVLQHHLSKYAAVDIVILCACGERAGEVVEVLQEFPHLIDPHTGKSLMHRTCIICNTSSMPVAARESSIYLGVTIAEYYRQMGLDILLLADSTSRWAQALREISGRLEEIPGEEAFPAYLSSRIAAFYERGGAITTKDGSEGSLTICGAVSPAGGNFEEPVTQSTLAVVGAFCGLSKARADARRYPSIDPLISWSKYLNQVGQILEEKVSGWGGAVKKAAQFLEKGSEIGKRMEVVGEEGVSMEDMEIYLKAELYDFCYLQQNAFDPVDCYCPFERQIELFSLISRIFDAKFVFDSPDDARSFFLELQSKIKTLNGLKFLSEEYHESKEVIVRLLEKTMVQMA.

242–249 contributes to the ATP binding site; that stretch reads GPFGAGKT.

Belongs to the ATPase alpha/beta chains family.

It carries out the reaction ATP + H2O + 4 H(+)(in) = ADP + phosphate + 5 H(+)(out). Functionally, produces ATP from ADP in the presence of a proton gradient across the membrane. The V-type alpha chain is a catalytic subunit. The protein is V-type ATP synthase alpha chain (atpA) of Chlamydia pneumoniae (Chlamydophila pneumoniae).